The sequence spans 280 residues: uncharacterized protein (280 aa).

Positions 1 to 78 (MDVIQRIKEK…VLLAQSISRA (78 aa)) constitute an HTH rpiR-type domain. A DNA-binding region (H-T-H motif) is located at residues 37–57 (ISDLSEKAGVKSEASVVKFYK). An SIS domain is found at 123–263 (TVDLFKNAQR…YTLLAARDPR (141 aa)).

This is an uncharacterized protein from Thermotoga maritima (strain ATCC 43589 / DSM 3109 / JCM 10099 / NBRC 100826 / MSB8).